The following is a 499-amino-acid chain: MRSSLAPAIRLMQSVSRDSCYRGFIIVMTFLFYTCYHLSRKPISIVKGQLHRNCSALPNPPNISENDTTWCSWAPFENTNYKELLGSLDTAFLVSYAIGMFFSGIFGERLPLRYYLSGGMIISGIFTSFMGFGYYWNIHALWYYILFQILNGLAQTTGWPAVVTCMGNWFGKGKRGFIMGIWNSHTAVGNILGSLIAGAFVSTAWGLSFIVPGIIIAAFGIFCFFFLVEYPEDVGCTPPQQPEEAKHDLENIPVSYNSTDTIFKSTESNADDSENAHTEVEHPQAISFIGALRIPGVVEFSLCLLFAKLVSYTFLYWLPLYIANDAQFDPKAAGDLSTLFDVGGIIGGILAGGISDYTGKSAITCTIMLILTAPMLFIYNYFGQTGISTTIAMLIICGILVNGPYSLITTAVSADLGTHESLQGNAKALSTVTAIIDGSGSIGAALGPSLAGVLSSRGWNYVFYMLIAADICACLLLARLVYKEIRSLCGGERKSYTEM.

The helical transmembrane segment at 21-40 (YRGFIIVMTFLFYTCYHLSR) threads the bilayer. N-linked (GlcNAc...) asparagine glycosylation is found at N53, N62, and N66. 11 helical membrane passes run 86 to 106 (GSLD…SGIF), 116 to 136 (LSGG…GYYW), 143 to 163 (YYIL…PAVV), 187 to 207 (AVGN…AWGL), 208 to 228 (SFIV…FFLV), 302 to 322 (LCLL…PLYI), 334 to 354 (GDLS…AGGI), 362 to 382 (AITC…YNYF), 391 to 411 (IAML…ITTA), 434 to 454 (AIID…AGVL), and 458 to 478 (GWNY…LLLA).

The protein belongs to the major facilitator superfamily. Organophosphate:Pi antiporter (OPA) (TC 2.A.1.4) family.

It is found in the endoplasmic reticulum membrane. The catalysed reaction is D-glucose 6-phosphate(in) + phosphate(out) = D-glucose 6-phosphate(out) + phosphate(in). Inorganic phosphate and glucose-6-phosphate antiporter. May transport cytoplasmic glucose-6-phosphate into the lumen of the endoplasmic reticulum and translocate inorganic phosphate into the opposite direction. The sequence is that of Glucose-6-phosphate exchanger SLC37A2 from Xenopus laevis (African clawed frog).